Here is a 386-residue protein sequence, read N- to C-terminus: 8-amino-7-oxononanoate synthase (386 aa).

Substrate-binding residues include R22 and R29. 109-110 (GY) contributes to the pyridoxal 5'-phosphate binding site. Residue H134 participates in substrate binding. Pyridoxal 5'-phosphate contacts are provided by residues S182, 207-210 (DDAH), and 237-240 (TLSK). At K240 the chain carries N6-(pyridoxal phosphate)lysine. Substrate is bound at residue T349.

The protein belongs to the class-II pyridoxal-phosphate-dependent aminotransferase family. BioF subfamily. As to quaternary structure, homodimer. Pyridoxal 5'-phosphate serves as cofactor.

The catalysed reaction is 6-carboxyhexanoyl-[ACP] + L-alanine + H(+) = (8S)-8-amino-7-oxononanoate + holo-[ACP] + CO2. Its pathway is cofactor biosynthesis; biotin biosynthesis. Its function is as follows. Catalyzes the decarboxylative condensation of pimeloyl-[acyl-carrier protein] and L-alanine to produce 8-amino-7-oxononanoate (AON), [acyl-carrier protein], and carbon dioxide. The chain is 8-amino-7-oxononanoate synthase from Beijerinckia indica subsp. indica (strain ATCC 9039 / DSM 1715 / NCIMB 8712).